A 222-amino-acid polypeptide reads, in one-letter code: Sigma non-opioid intracellular receptor 1 (222 aa).

Over 1–7 (MGVAGPW) the chain is Lumenal. Residues 8–29 (VLRVGLGLGAFALLLQGLRGWL) form a helical membrane-spanning segment. At 30–222 (ACKRYEFQPA…ASAFFSTLGC (193 aa)) the chain is on the cytoplasmic side. An important for ligand-binding region spans residues 98–105 (SLTEYVLL). Residues 176-222 (FVPSTLAFALADTLFSTQDFITLFYTLRAYTKGLLLEASAFFSTLGC) form a C-terminal hydrophobic region region.

It belongs to the ERG2 family. As to quaternary structure, homotrimer.

It is found in the nucleus inner membrane. Its subcellular location is the nucleus outer membrane. The protein localises to the nucleus envelope. The protein resides in the cytoplasmic vesicle. It localises to the endoplasmic reticulum membrane. It is found in the membrane. Its function is as follows. May function in lipid transport from the endoplasmic reticulum and be involved in a wide array of cellular functions probably through regulation of the biogenesis of lipid microdomains at the plasma membrane. May regulate calcium efflux at the endoplasmic reticulum. This Gallus gallus (Chicken) protein is Sigma non-opioid intracellular receptor 1 (SIGMAR1).